The following is a 154-amino-acid chain: MKKDEVKVVVIGSSDVGKTTLMENLIDKIGKVEYKGITTAIDYGSLTIKDKKIHFFGTPGQKRFEFMRELALKGTNFALVVLDASKGITKEDEEIIKLLESKKIPYGIFINKTDVGDIDTSEVYNFCNPKFIVKGCAVKKDGLDELINKIMSHT.

Position 12-19 (12-19) interacts with GTP; that stretch reads GSSDVGKT. The G domain maps to 17 to 112; sequence GKTTLMENLI…KIPYGIFINK (96 aa).

The protein to M.thermoautotrophicum MTH765.

This is an uncharacterized protein from Methanocaldococcus jannaschii (strain ATCC 43067 / DSM 2661 / JAL-1 / JCM 10045 / NBRC 100440) (Methanococcus jannaschii).